We begin with the raw amino-acid sequence, 101 residues long: Small ribosomal subunit protein bS18c (101 aa).

The segment covering Met-1–Leu-19 has biased composition (basic residues). The segment at Met-1 to Gly-23 is disordered.

Belongs to the bacterial ribosomal protein bS18 family. Part of the 30S ribosomal subunit.

Its subcellular location is the plastid. It is found in the chloroplast. This Liriodendron tulipifera (Tuliptree) protein is Small ribosomal subunit protein bS18c.